Reading from the N-terminus, the 51-residue chain is Large ribosomal subunit protein bL33 (51 aa).

This sequence belongs to the bacterial ribosomal protein bL33 family.

The sequence is that of Large ribosomal subunit protein bL33 from Acidithiobacillus ferrooxidans (strain ATCC 53993 / BNL-5-31) (Leptospirillum ferrooxidans (ATCC 53993)).